We begin with the raw amino-acid sequence, 209 residues long: MLTAIRKNGLILAVFACVSTGLVALTYALTAEQIQQQEQKQLLQVLNQVIPHKYHDNPLAQACTLVNDDKLGTAKTMHAYLAQRDGQPTAIAIETIAPDGYNGEIKLIVGIANNGTVLGVRVLAHQETPGLGDKIDLRISNWVLGFNGQQVTADNQDDWKVRKDGGQFDQFTGATITPRAVVLAVKKAVEYVNQHQQQLHNQPNPCEGQ.

A helical membrane pass occupies residues 9 to 29 (GLILAVFACVSTGLVALTYAL). Residue Thr-175 is modified to FMN phosphoryl threonine.

Belongs to the RnfG family. As to quaternary structure, the complex is composed of six subunits: RnfA, RnfB, RnfC, RnfD, RnfE and RnfG. It depends on FMN as a cofactor.

Its subcellular location is the cell inner membrane. In terms of biological role, part of a membrane-bound complex that couples electron transfer with translocation of ions across the membrane. This is Ion-translocating oxidoreductase complex subunit G from Vibrio cholerae serotype O1 (strain ATCC 39315 / El Tor Inaba N16961).